A 122-amino-acid polypeptide reads, in one-letter code: Large ribosomal subunit protein bL12 (122 aa).

Belongs to the bacterial ribosomal protein bL12 family. In terms of assembly, homodimer. Part of the ribosomal stalk of the 50S ribosomal subunit. Forms a multimeric L10(L12)X complex, where L10 forms an elongated spine to which 2 to 4 L12 dimers bind in a sequential fashion. Binds GTP-bound translation factors.

Its function is as follows. Forms part of the ribosomal stalk which helps the ribosome interact with GTP-bound translation factors. Is thus essential for accurate translation. The sequence is that of Large ribosomal subunit protein bL12 from Stenotrophomonas maltophilia (strain R551-3).